The sequence spans 256 residues: Small ribosomal subunit protein eS1 (256 aa).

N-acetylalanine; partial is present on alanine 2.

The protein belongs to the eukaryotic ribosomal protein eS1 family. As to quaternary structure, component of the small ribosomal subunit. Mature ribosomes consist of a small (40S) and a large (60S) subunit. The 40S subunit contains about 33 different proteins and 1 molecule of RNA (18S). The 60S subunit contains about 49 different proteins and 3 molecules of RNA (25S, 5.8S and 5S).

It localises to the cytoplasm. In Botryotinia fuckeliana (strain B05.10) (Noble rot fungus), this protein is Small ribosomal subunit protein eS1 (rps1).